The sequence spans 1394 residues: DNA-directed RNA polymerase subunit beta' (1394 aa).

4 residues coordinate Zn(2+): cysteine 71, cysteine 73, cysteine 86, and cysteine 89. Positions 462, 464, and 466 each coordinate Mg(2+). Zn(2+) is bound by residues cysteine 810, cysteine 883, cysteine 890, and cysteine 893.

This sequence belongs to the RNA polymerase beta' chain family. As to quaternary structure, the RNAP catalytic core consists of 2 alpha, 1 beta, 1 beta' and 1 omega subunit. When a sigma factor is associated with the core the holoenzyme is formed, which can initiate transcription. It depends on Mg(2+) as a cofactor. The cofactor is Zn(2+).

It catalyses the reaction RNA(n) + a ribonucleoside 5'-triphosphate = RNA(n+1) + diphosphate. In terms of biological role, DNA-dependent RNA polymerase catalyzes the transcription of DNA into RNA using the four ribonucleoside triphosphates as substrates. The protein is DNA-directed RNA polymerase subunit beta' of Beijerinckia indica subsp. indica (strain ATCC 9039 / DSM 1715 / NCIMB 8712).